The primary structure comprises 282 residues: Protein canopy homolog 3 (282 aa).

A signal peptide spans 1–33 (MEPLPEPASGPRPRPHRLLLLSLLLLLLPLLPA). The 223-residue stretch at 53–275 (SKCEVCKYVA…EGIQKASPLT (223 aa)) folds into the Saposin B-type domain. Intrachain disulfides connect C55–C212, C58–C200, and C110–C172. Residue N159 is glycosylated (N-linked (GlcNAc...) asparagine). Positions 159 to 185 (NETSAEVADLKKQCDVLVEEFEEVIED) form a coiled coil. Residues 221 to 282 (KGDTAALGGK…PLTHSPPDEL (62 aa)) form a disordered region. Positions 255 to 266 (DLDGDPSPEEDE) are enriched in acidic residues.

It belongs to the canopy family. As to quaternary structure, interacts with HSP90B1; this interaction is disrupted in the presence of ATP. Interacts with TLR1, TLR2, TLR4 and TLR9.

The protein localises to the endoplasmic reticulum. Its function is as follows. Toll-like receptor (TLR)-specific co-chaperone for HSP90B1. Required for proper TLR folding, except that of TLR3, and hence controls TLR exit from the endoplasmic reticulum. Consequently, required for both innate and adaptive immune responses. The chain is Protein canopy homolog 3 (CNPY3) from Bos taurus (Bovine).